Reading from the N-terminus, the 886-residue chain is Cytosolic carboxypeptidase-like protein 5 (886 aa).

One can recognise a Peptidase M14 domain in the interval 157-570 (YPFSYSDCQE…AMAIAALDMA (414 aa)). 2 residues coordinate Zn(2+): His-252 and Glu-255. A compositionally biased stretch (low complexity) spans 344-354 (SQSSSEHQPSS). Positions 344 to 364 (SQSSSEHQPSSCLPPDAPVSD) are disordered. Zn(2+) is bound at residue His-434. Residue Glu-516 is the Proton donor/acceptor of the active site. Disordered regions lie at residues 605 to 734 (STLN…SSHK) and 784 to 848 (LQAR…FSPI). A compositionally biased stretch (polar residues) spans 631–640 (CSENTLSRAR). A compositionally biased stretch (low complexity) spans 641–666 (SFSTGTSAGGSSSSQQNSPQMKNSPS). Basic and acidic residues predominate over residues 696–705 (REPRSQDRRR). Low complexity predominate over residues 714–732 (PAGSLAPSPAPTSSGPASS). Position 841 is a phosphoserine (Ser-841).

Belongs to the peptidase M14 family. Zn(2+) is required as a cofactor. Expressed in brain.

It is found in the cytoplasm. The protein resides in the cytosol. The protein localises to the nucleus. Its subcellular location is the cytoskeleton. It localises to the spindle. It is found in the midbody. The catalysed reaction is gamma-L-glutamyl-L-glutamyl-[protein] + H2O = L-glutamyl-[protein] + L-glutamate. It carries out the reaction (L-glutamyl)(n+1)-gamma-L-glutamyl-L-glutamyl-[protein] + H2O = (L-glutamyl)(n)-gamma-L-glutamyl-L-glutamyl-[protein] + L-glutamate. The enzyme catalyses C-terminal L-alpha-aminoacyl-L-glutamyl-[tubulin] + H2O = C-terminal L-alpha-aminoacyl-[tubulin] + L-glutamate. It catalyses the reaction C-terminal L-alpha-aminoacyl-L-glutamyl-L-glutamyl-[tubulin] + H2O = C-terminal L-alpha-aminoacyl-L-glutamyl-[tubulin] + L-glutamate. Functionally, metallocarboxypeptidase that mediates deglutamylation of tubulin and non-tubulin target proteins. Catalyzes the removal of polyglutamate side chains present on the gamma-carboxyl group of glutamate residues within the C-terminal tail of alpha- and beta-tubulin. Cleaves alpha- and gamma-linked polyglutamate tubulin side-chain, as well as the branching point glutamate. Also catalyzes the removal of alpha-linked glutamate residues from the carboxy-terminus of alpha-tubulin. Mediates deglutamylation of nucleotidyltransferase CGAS, leading to CGAS antiviral defense response activation. In Homo sapiens (Human), this protein is Cytosolic carboxypeptidase-like protein 5.